Here is a 255-residue protein sequence, read N- to C-terminus: 14-3-3-like protein GF14 psi (255 aa).

At S66 the chain carries Phosphoserine. The residue at position 162 (T162) is a Phosphothreonine. Position 189 is a phosphoserine (S189). A phosphothreonine mark is found at T210 and T238.

It belongs to the 14-3-3 family. In terms of assembly, component of a DNA binding complex that binds to the G box. Interacts with IDH3, AGT3, GLN1-1, GLN1-2, GLN1-4, SAM1, SAM2, MDH1, METK3 and MDH2. Binds to 1-aminocyclopropane-1-carboxylate synthases (ACS) such as ACS2, ACS5, ACS6, ACS8, and ACS11. Interacts with FD. Interacts with DREB1A and DREB1B in the nucleus. Interacts with CINV1.

It is found in the cytoplasm. Its subcellular location is the nucleus. Is associated with a DNA binding complex that binds to the G box, a well-characterized cis-acting DNA regulatory element found in plant genes. Involved in the regulation of nutrient metabolism. Reciprocal negative transcription regulation of miR396. Negative regulator of constitutive freezing tolerance and cold acclimation by controlling cold-induced gene expression partially through an ethylene (ET)-dependent pathway; prevents ethylene (ET) biosynthesis, probably by binding 1-aminocyclopropane-1-carboxylate synthases (ACS) to reduce their stability, thus contributing to establish adequate ET levels under both standard and low-temperature conditions. The chain is 14-3-3-like protein GF14 psi from Arabidopsis thaliana (Mouse-ear cress).